The sequence spans 343 residues: Beta-ketoacyl-[acyl-carrier-protein] synthase III 1 (343 aa).

Residues cysteine 122 and histidine 268 contribute to the active site. The tract at residues 269-273 (QANVR) is ACP-binding. Residue asparagine 299 is part of the active site.

This sequence belongs to the thiolase-like superfamily. FabH family. As to quaternary structure, homodimer.

It localises to the cytoplasm. The enzyme catalyses malonyl-[ACP] + acetyl-CoA + H(+) = 3-oxobutanoyl-[ACP] + CO2 + CoA. It participates in lipid metabolism; fatty acid biosynthesis. In terms of biological role, essential enzyme that catalyzes the condensation reaction of fatty acid synthesis by the addition to an acyl acceptor of two carbons from malonyl-ACP. Catalyzes the first condensation reaction which initiates fatty acid synthesis and may therefore play a role in governing the total rate of fatty acid production. Possesses both acetoacetyl-ACP synthase and acetyl transacylase activities. Its substrate specificity determines the biosynthesis of branched-chain of fatty acids. The sequence is that of Beta-ketoacyl-[acyl-carrier-protein] synthase III 1 from Streptomyces coelicolor (strain ATCC BAA-471 / A3(2) / M145).